The primary structure comprises 147 residues: D-aminoacyl-tRNA deacylase (147 aa).

The Gly-cisPro motif, important for rejection of L-amino acids motif lies at Gly-136–Pro-137.

Belongs to the DTD family. Homodimer.

The protein resides in the cytoplasm. It carries out the reaction glycyl-tRNA(Ala) + H2O = tRNA(Ala) + glycine + H(+). The enzyme catalyses a D-aminoacyl-tRNA + H2O = a tRNA + a D-alpha-amino acid + H(+). Functionally, an aminoacyl-tRNA editing enzyme that deacylates mischarged D-aminoacyl-tRNAs. Also deacylates mischarged glycyl-tRNA(Ala), protecting cells against glycine mischarging by AlaRS. Acts via tRNA-based rather than protein-based catalysis; rejects L-amino acids rather than detecting D-amino acids in the active site. By recycling D-aminoacyl-tRNA to D-amino acids and free tRNA molecules, this enzyme counteracts the toxicity associated with the formation of D-aminoacyl-tRNA entities in vivo and helps enforce protein L-homochirality. This is D-aminoacyl-tRNA deacylase from Persephonella marina (strain DSM 14350 / EX-H1).